The primary structure comprises 486 residues: Alpha-L-arabinofuranosidase B (486 aa).

Residues 1–25 form the signal peptide; it reads MLSLKAVLRFASVAVAVVLPTLAQA. A glycan (N-linked (GlcNAc...) asparagine) is linked at Asn-42. Positions 45 to 342 are catalytic; the sequence is LVKQRADPQI…KLYWRSDGTP (298 aa). The Proton acceptor role is filled by Asp-51. Glu-229 serves as the catalytic Proton donor. Residues Asn-302, Asn-416, and Asn-426 are each glycosylated (N-linked (GlcNAc...) asparagine). The segment at 359-467 is ABD; it reads SSADQTLYVG…AGSYLVSGGN (109 aa).

This sequence belongs to the glycosyl hydrolase 43 family.

It is found in the secreted. The enzyme catalyses Hydrolysis of terminal non-reducing alpha-L-arabinofuranoside residues in alpha-L-arabinosides.. It functions in the pathway glycan metabolism; L-arabinan degradation. Its function is as follows. Secreted arabinofuranosidase that causes degradation of rice cell wall components during infection. Required for virulence. The protein is Alpha-L-arabinofuranosidase B of Pyricularia oryzae (strain 70-15 / ATCC MYA-4617 / FGSC 8958) (Rice blast fungus).